We begin with the raw amino-acid sequence, 230 residues long: Small ribosomal subunit protein uS3 (230 aa).

The 69-residue stretch at 39 to 107 (VRKYLADKLQ…PAQINIAEIR (69 aa)) folds into the KH type-2 domain.

The protein belongs to the universal ribosomal protein uS3 family. Part of the 30S ribosomal subunit. Forms a tight complex with proteins S10 and S14.

Functionally, binds the lower part of the 30S subunit head. Binds mRNA in the 70S ribosome, positioning it for translation. In Shewanella oneidensis (strain ATCC 700550 / JCM 31522 / CIP 106686 / LMG 19005 / NCIMB 14063 / MR-1), this protein is Small ribosomal subunit protein uS3.